The primary structure comprises 159 residues: Membrane protein FAM174B (159 aa).

An N-terminal signal peptide occupies residues M1 to A27. The tract at residues S28–S73 is disordered. Topologically, residues S28–T90 are extracellular. Positions P52–S69 are enriched in gly residues. A glycan (N-linked (GlcNAc...) asparagine) is linked at N54. A helical membrane pass occupies residues L91 to L111. Topologically, residues R112–R159 are cytoplasmic.

Belongs to the FAM174 family.

It is found in the cell membrane. Its subcellular location is the golgi apparatus. In terms of biological role, essential for Golgi structural integrity. The polypeptide is Membrane protein FAM174B (FAM174B) (Bos taurus (Bovine)).